The sequence spans 191 residues: Gamma-glutamylaminecyclotransferase B (191 aa).

7–10 is a substrate binding site; it reads YGTL. Catalysis depends on Glu82, which acts as the Proton acceptor. Residues 155–178 are compositionally biased toward polar residues; sequence SADFSQNSEQEIKKNNSLQILTST. Residues 155–191 form a disordered region; sequence SADFSQNSEQEIKKNNSLQILTSTGDDHDVNFRGPLQ.

Belongs to the gamma-glutamylcyclotransferase family.

The catalysed reaction is epsilon-(gamma-L-glutamyl)-L-lysine = 5-oxo-L-proline + L-lysine. May contribute to degradation of proteins cross-linked by transglutaminases by degrading the cross-link between a lysine and a glutamic acid residue. Catalyzes the formation of 5-oxo-L-proline from L-gamma-glutamyl-L-epsilon-lysine. The sequence is that of Gamma-glutamylaminecyclotransferase B (ggact.2) from Danio rerio (Zebrafish).